The sequence spans 183 residues: Threonylcarbamoyl-AMP synthase (183 aa).

The 183-residue stretch at 1–183 folds into the YrdC-like domain; that stretch reads MNFTEIAEKL…LLTDQLIREG (183 aa).

The protein belongs to the SUA5 family. TsaC subfamily.

The protein resides in the cytoplasm. The catalysed reaction is L-threonine + hydrogencarbonate + ATP = L-threonylcarbamoyladenylate + diphosphate + H2O. In terms of biological role, required for the formation of a threonylcarbamoyl group on adenosine at position 37 (t(6)A37) in tRNAs that read codons beginning with adenine. Catalyzes the conversion of L-threonine, HCO(3)(-)/CO(2) and ATP to give threonylcarbamoyl-AMP (TC-AMP) as the acyladenylate intermediate, with the release of diphosphate. The sequence is that of Threonylcarbamoyl-AMP synthase from Actinobacillus succinogenes (strain ATCC 55618 / DSM 22257 / CCUG 43843 / 130Z).